The chain runs to 432 residues: Glucose-6-phosphate isomerase (432 aa).

The Proton donor role is filled by E283. Active-site residues include H304 and K418.

It belongs to the GPI family.

The protein resides in the cytoplasm. The catalysed reaction is alpha-D-glucose 6-phosphate = beta-D-fructose 6-phosphate. Its pathway is carbohydrate biosynthesis; gluconeogenesis. It participates in carbohydrate degradation; glycolysis; D-glyceraldehyde 3-phosphate and glycerone phosphate from D-glucose: step 2/4. In terms of biological role, catalyzes the reversible isomerization of glucose-6-phosphate to fructose-6-phosphate. This Rubrobacter xylanophilus (strain DSM 9941 / JCM 11954 / NBRC 16129 / PRD-1) protein is Glucose-6-phosphate isomerase.